Consider the following 538-residue polypeptide: Phosphoenolpyruvate carboxykinase (ATP) (538 aa).

Positions 64, 205, and 211 each coordinate substrate. Residues K211, H230, and 246 to 254 contribute to the ATP site; that span reads GLSGTGKTT. Mn(2+) contacts are provided by K211 and H230. D267 contributes to the Mn(2+) binding site. Residues E295, R331, 447 to 448, and T453 each bind ATP; that span reads RI. R331 is a substrate binding site.

Belongs to the phosphoenolpyruvate carboxykinase (ATP) family. As to quaternary structure, monomer. It depends on Mn(2+) as a cofactor.

The protein resides in the cytoplasm. It carries out the reaction oxaloacetate + ATP = phosphoenolpyruvate + ADP + CO2. It functions in the pathway carbohydrate biosynthesis; gluconeogenesis. Functionally, involved in the gluconeogenesis. Catalyzes the conversion of oxaloacetate (OAA) to phosphoenolpyruvate (PEP) through direct phosphoryl transfer between the nucleoside triphosphate and OAA. The chain is Phosphoenolpyruvate carboxykinase (ATP) from Baumannia cicadellinicola subsp. Homalodisca coagulata.